Consider the following 293-residue polypeptide: MDNKDEYLLNFKGYNFQKTLVKMEVVENIENYEIRDDDIFIVTYPKSGTIWTQQILSLIYFEGHRNRTENIETIDRAPFFEYNIHKLDYAKMPSPRIFSSHIPYYLVPKGLKDKKAKILYMYRNPKDVLISYFHFSNLMLIFQNPDTVESFMQTFLDGDVVGSLWFDHIRGWYEHRHDFNIMFMSFEDMKKDFRSSVLKICSFLEKELSEEDVDAVVRQATFQKMKADPRANYEHIIKDELGTRNEMGSFLRKGVVGAWKHYLTVDQSERFDKIFHRNMKNIPLKFIWDINEE.

46–51 (KSGTIW) lines the 3'-phosphoadenylyl sulfate pocket. The Proton acceptor role is filled by histidine 101. 3'-phosphoadenylyl sulfate-binding positions include arginine 123, serine 131, 220-225 (ATFQKM), and 252-254 (RKG).

This sequence belongs to the sulfotransferase 1 family.

It localises to the cytoplasm. It catalyses the reaction a primary amine + 3'-phosphoadenylyl sulfate = a sulfamate + adenosine 3',5'-bisphosphate + 2 H(+). Functionally, sulfotransferase that utilizes 3'-phospho-5'-adenylyl sulfate (PAPS) as sulfonate donor to catalyze the N-sulfonation of amines. The chain is Amine sulfotransferase (Sult3a1) from Mus musculus (Mouse).